An 84-amino-acid chain; its full sequence is Esculentin-1SIa (84 aa).

A signal peptide spans 1-22; that stretch reads MFTLKKPLLLIVLLGIISLSLC. Positions 23–36 are cleaved as a propeptide — removed in mature form; sequence EQERAADEDEGSEI. Cys78 and Cys84 are joined by a disulfide.

In terms of tissue distribution, expressed by the skin glands.

It is found in the secreted. In terms of biological role, has antimicrobial activity against Gram-negative bacterium E.coli ATCC 8739 (MIC=6.3 ug), against Gram positive bacteria S.aureus ATCC 6538 (MIC=3.1 ug), methicillin-resistant S.aureus ATCC 43300 (MIC=25 ug) and B.subtilis ATCC 6633 (MIC=25 ug). Has no activity against fungus C.albicans ATCC 90028. This chain is Esculentin-1SIa, found in Odorrana ishikawae (Ishikawa's frog).